The sequence spans 203 residues: Transcriptional regulator GfcR (203 aa).

The protein belongs to the purine/pyrimidine phosphoribosyltransferase family. GfcR subfamily.

The chain is Transcriptional regulator GfcR from Methanococcoides burtonii (strain DSM 6242 / NBRC 107633 / OCM 468 / ACE-M).